We begin with the raw amino-acid sequence, 212 residues long: ATP-dependent Clp protease proteolytic subunit (212 aa).

The active-site Nucleophile is Ser-107. Residue His-132 is part of the active site.

It belongs to the peptidase S14 family. As to quaternary structure, fourteen ClpP subunits assemble into 2 heptameric rings which stack back to back to give a disk-like structure with a central cavity, resembling the structure of eukaryotic proteasomes.

It is found in the cytoplasm. It carries out the reaction Hydrolysis of proteins to small peptides in the presence of ATP and magnesium. alpha-casein is the usual test substrate. In the absence of ATP, only oligopeptides shorter than five residues are hydrolyzed (such as succinyl-Leu-Tyr-|-NHMec, and Leu-Tyr-Leu-|-Tyr-Trp, in which cleavage of the -Tyr-|-Leu- and -Tyr-|-Trp bonds also occurs).. Functionally, cleaves peptides in various proteins in a process that requires ATP hydrolysis. Has a chymotrypsin-like activity. Plays a major role in the degradation of misfolded proteins. The sequence is that of ATP-dependent Clp protease proteolytic subunit from Pseudoalteromonas atlantica (strain T6c / ATCC BAA-1087).